A 71-amino-acid chain; its full sequence is Plasticin-C1 (71 aa).

A signal peptide spans 1–22 (MAFLKKSLLLVLFLGLVSLSIC). The propeptide occupies 23–45 (EEEKRENEDEEKQEDDDQSENKR). The disordered stretch occupies residues 25–46 (EKRENEDEEKQEDDDQSENKRG). Residues 30–40 (EDEEKQEDDDQ) are compositionally biased toward acidic residues. An Asparagine amide modification is found at asparagine 68. The propeptide occupies 70-71 (ES).

It belongs to the frog skin active peptide (FSAP) family. Plasticin subfamily. In terms of tissue distribution, expressed by the skin glands.

Its subcellular location is the secreted. The protein resides in the target cell membrane. Functionally, neutral peptide with no antimicrobial activity. May act in synergy with cationic peptides by enhancing their activity. Has a moderate hemolytic activity. This Agalychnis callidryas (Red-eyed tree frog) protein is Plasticin-C1.